Here is a 151-residue protein sequence, read N- to C-terminus: Probable cyclic pyranopterin monophosphate synthase (151 aa).

Residues 66-68 (MCH) and 102-103 (ME) contribute to the substrate site. Residue Asp-117 is part of the active site.

Belongs to the MoaC family. Homohexamer; trimer of dimers.

It catalyses the reaction (8S)-3',8-cyclo-7,8-dihydroguanosine 5'-triphosphate = cyclic pyranopterin phosphate + diphosphate. Its pathway is cofactor biosynthesis; molybdopterin biosynthesis. Catalyzes the conversion of (8S)-3',8-cyclo-7,8-dihydroguanosine 5'-triphosphate to cyclic pyranopterin monophosphate (cPMP). The chain is Probable cyclic pyranopterin monophosphate synthase from Sulfurisphaera tokodaii (strain DSM 16993 / JCM 10545 / NBRC 100140 / 7) (Sulfolobus tokodaii).